Reading from the N-terminus, the 127-residue chain is Group 3 truncated hemoglobin ctb (127 aa).

Positions 64 and 72 each coordinate heme.

This sequence belongs to the truncated hemoglobin family. Group III subfamily. In terms of assembly, monomer. Heme is required as a cofactor.

The protein localises to the cytoplasm. Its function is as follows. Has been suggested to be involved in cytochrome c peroxidase or P450-like oxygen chemistry or cyanide detoxification. The high oxygen affinity of this protein suggests that it probably does not function as an oxygen transporter. This Campylobacter jejuni subsp. jejuni serotype O:2 (strain ATCC 700819 / NCTC 11168) protein is Group 3 truncated hemoglobin ctb (ctb).